A 195-amino-acid chain; its full sequence is Peptidyl-tRNA hydrolase (195 aa).

TRNA is bound at residue Y14. Residue H19 is the Proton acceptor of the active site. The tRNA site is built by Y64 and N66.

Belongs to the PTH family. In terms of assembly, monomer.

The protein localises to the cytoplasm. It carries out the reaction an N-acyl-L-alpha-aminoacyl-tRNA + H2O = an N-acyl-L-amino acid + a tRNA + H(+). In terms of biological role, hydrolyzes ribosome-free peptidyl-tRNAs (with 1 or more amino acids incorporated), which drop off the ribosome during protein synthesis, or as a result of ribosome stalling. Its function is as follows. Catalyzes the release of premature peptidyl moieties from peptidyl-tRNA molecules trapped in stalled 50S ribosomal subunits, and thus maintains levels of free tRNAs and 50S ribosomes. The chain is Peptidyl-tRNA hydrolase from Desulforudis audaxviator (strain MP104C).